Reading from the N-terminus, the 290-residue chain is Dehydrodolichyl diphosphate synthase CPT3 (290 aa).

The active site involves Asp-42.

The protein belongs to the UPP synthase family. Requires Mg(2+) as cofactor. Expressed in leaf trichomes and stem trichomes. Expressed at low levels in young leaves, stems and old leaves.

It is found in the cytoplasm. It localises to the cytosol. The catalysed reaction is n isopentenyl diphosphate + (2E,6E)-farnesyl diphosphate = a di-trans,poly-cis-polyprenyl diphosphate + n diphosphate. In terms of biological role, catalyzes cis-prenyl chain elongation to produce the polyprenyl backbone of dolichol, a glycosyl carrier-lipid required for the biosynthesis of several classes of glycoprotein. The polypeptide is Dehydrodolichyl diphosphate synthase CPT3 (Solanum lycopersicum (Tomato)).